Consider the following 365-residue polypeptide: Cobalt-precorrin-5B C(1)-methyltransferase (365 aa).

This sequence belongs to the CbiD family.

It carries out the reaction Co-precorrin-5B + S-adenosyl-L-methionine = Co-precorrin-6A + S-adenosyl-L-homocysteine. The protein operates within cofactor biosynthesis; adenosylcobalamin biosynthesis; cob(II)yrinate a,c-diamide from sirohydrochlorin (anaerobic route): step 6/10. Catalyzes the methylation of C-1 in cobalt-precorrin-5B to form cobalt-precorrin-6A. This is Cobalt-precorrin-5B C(1)-methyltransferase from Methanococcus maripaludis (strain DSM 14266 / JCM 13030 / NBRC 101832 / S2 / LL).